Reading from the N-terminus, the 322-residue chain is UDP-galactose transporter homolog 1 (322 aa).

The next 5 membrane-spanning stretches (helical) occupy residues 4–24, 43–63, 76–96, 105–125, and 129–149; these read FMRQ…SWAV, ALLS…WNWF, FLGY…FGYA, TVIL…VFVY, and FPPH…IFSY. N-linked (GlcNAc...) asparagine glycosylation occurs at N152. 4 helical membrane passes run 164 to 184, 199 to 219, 250 to 270, and 290 to 310; these read SPIG…TNTT, MMIA…ISPF, LFIF…ITLT, and IQWL…GLKI. Residues N313 and N314 are each glycosylated (N-linked (GlcNAc...) asparagine).

This sequence belongs to the nucleotide-sugar transporter family. SLC35B subfamily.

It localises to the endoplasmic reticulum membrane. Its function is as follows. May be involved in specific transport of UDP-Gal from the cytosol to the Golgi lumen. Involved in the maintenance of optimal conditions for the folding of secretory pathway proteins in the endoplasmic reticulum. This Schizosaccharomyces pombe (strain 972 / ATCC 24843) (Fission yeast) protein is UDP-galactose transporter homolog 1 (hut1).